A 430-amino-acid chain; its full sequence is CC-adding tRNA nucleotidyltransferase (430 aa).

33–36 (GCVR) lines the CTP pocket. Mg(2+) contacts are provided by Asp-46 and Asp-48. CTP-binding positions include 108–109 (RD), Asn-113, 150–159 (DPLRIVRAYR), and Arg-190.

Belongs to the tRNA nucleotidyltransferase/poly(A) polymerase family. Requires Mg(2+) as cofactor.

The catalysed reaction is a tRNA precursor + 2 CTP = a tRNA with a 3' CC end + 2 diphosphate. Functionally, tRNA nucleotidyltransferase involved in the synthesis of the tRNA CCA terminus. Adds the two cytidine residues to tRNA. This chain is CC-adding tRNA nucleotidyltransferase, found in Geobacter sulfurreducens (strain ATCC 51573 / DSM 12127 / PCA).